A 363-amino-acid chain; its full sequence is Peptide chain release factor 2 (363 aa).

Q251 is modified (N5-methylglutamine).

It belongs to the prokaryotic/mitochondrial release factor family. In terms of processing, methylated by PrmC. Methylation increases the termination efficiency of RF2.

It is found in the cytoplasm. Peptide chain release factor 2 directs the termination of translation in response to the peptide chain termination codons UGA and UAA. The protein is Peptide chain release factor 2 of Helicobacter pylori (strain P12).